We begin with the raw amino-acid sequence, 179 residues long: Interferon lambda-4 (179 aa).

An N-terminal signal peptide occupies residues Met1–Ala21. The segment at Ser130 to Ser149 is disordered.

It belongs to the lambda interferon family.

Its subcellular location is the cytoplasm. The protein resides in the secreted. Functionally, cytokine that may trigger an antiviral response activating the JAK-STAT pathway and up-regulating specifically some interferon-stimulated genes. This chain is Interferon lambda-4 (IFNL4), found in Homo sapiens (Human).